Consider the following 202-residue polypeptide: Na(+)-translocating NADH-quinone reductase subunit E (202 aa).

6 helical membrane-spanning segments follow: residues 11–31, 35–55, 81–101, 114–134, 144–164, and 180–200; these read SVFI…FIAI, VETA…TVPA, FLGF…LEML, GIYL…LFMV, VVYG…LAGI, and LGIA…FSGI.

The protein belongs to the NqrDE/RnfAE family. As to quaternary structure, composed of six subunits; NqrA, NqrB, NqrC, NqrD, NqrE and NqrF.

It localises to the cell inner membrane. It catalyses the reaction a ubiquinone + n Na(+)(in) + NADH + H(+) = a ubiquinol + n Na(+)(out) + NAD(+). Its function is as follows. NQR complex catalyzes the reduction of ubiquinone-1 to ubiquinol by two successive reactions, coupled with the transport of Na(+) ions from the cytoplasm to the periplasm. NqrA to NqrE are probably involved in the second step, the conversion of ubisemiquinone to ubiquinol. This is Na(+)-translocating NADH-quinone reductase subunit E from Azotobacter vinelandii (strain DJ / ATCC BAA-1303).